We begin with the raw amino-acid sequence, 149 residues long: Lymphocyte antigen 6 complex locus protein G5c (149 aa).

The N-terminal stretch at 1 to 41 (MLFMAGPAASWSLRPLGLHGVPQALCAVLLTVLVMKTLVLG) is a signal peptide. The UPAR/Ly6 domain maps to 59–149 (LNCYRCLLET…NPDNRKNSMH (91 aa)). 5 cysteine pairs are disulfide-bonded: cysteine 61-cysteine 88, cysteine 64-cysteine 73, cysteine 80-cysteine 106, cysteine 115-cysteine 132, and cysteine 133-cysteine 138. N-linked (GlcNAc...) asparagine glycosylation occurs at asparagine 95.

In terms of assembly, forms oligomers. In terms of processing, N-glycosylated. As to expression, detected in adult brain.

It is found in the secreted. In terms of biological role, may have a role in hematopoietic cell differentiation. The sequence is that of Lymphocyte antigen 6 complex locus protein G5c (Ly6g5c) from Mus musculus (Mouse).